The chain runs to 256 residues: Diaminopimelate epimerase (256 aa).

The substrate site is built by asparagine 11 and asparagine 63. Cysteine 72 functions as the Proton donor in the catalytic mechanism. Residues 73–74, asparagine 169, and 187–188 contribute to the substrate site; these read GN and ER. The active-site Proton acceptor is cysteine 197. Residue 198 to 199 coordinates substrate; sequence GT.

It belongs to the diaminopimelate epimerase family. Homodimer.

Its subcellular location is the cytoplasm. It carries out the reaction (2S,6S)-2,6-diaminopimelate = meso-2,6-diaminopimelate. It participates in amino-acid biosynthesis; L-lysine biosynthesis via DAP pathway; DL-2,6-diaminopimelate from LL-2,6-diaminopimelate: step 1/1. Its function is as follows. Catalyzes the stereoinversion of LL-2,6-diaminopimelate (L,L-DAP) to meso-diaminopimelate (meso-DAP), a precursor of L-lysine and an essential component of the bacterial peptidoglycan. This Flavobacterium psychrophilum (strain ATCC 49511 / DSM 21280 / CIP 103535 / JIP02/86) protein is Diaminopimelate epimerase.